Here is a 513-residue protein sequence, read N- to C-terminus: ATP synthase subunit alpha (513 aa).

169–176 (GDRQCGKT) lines the ATP pocket.

This sequence belongs to the ATPase alpha/beta chains family. As to quaternary structure, F-type ATPases have 2 components, CF(1) - the catalytic core - and CF(0) - the membrane proton channel. CF(1) has five subunits: alpha(3), beta(3), gamma(1), delta(1), epsilon(1). CF(0) has three main subunits: a(1), b(2) and c(9-12). The alpha and beta chains form an alternating ring which encloses part of the gamma chain. CF(1) is attached to CF(0) by a central stalk formed by the gamma and epsilon chains, while a peripheral stalk is formed by the delta and b chains.

Its subcellular location is the cell inner membrane. The catalysed reaction is ATP + H2O + 4 H(+)(in) = ADP + phosphate + 5 H(+)(out). Functionally, produces ATP from ADP in the presence of a proton gradient across the membrane. The alpha chain is a regulatory subunit. This is ATP synthase subunit alpha from Burkholderia cenocepacia (strain ATCC BAA-245 / DSM 16553 / LMG 16656 / NCTC 13227 / J2315 / CF5610) (Burkholderia cepacia (strain J2315)).